The chain runs to 530 residues: MSISLGNAFIKNFLGKAPDWYKIAILSFLVINPLVFFFVDPFTAGWLLVVEFIFTLAMALKCYPLQPGGLLAIEAIAIGMTSPEQVKHELVANIEVLLLLVFMVAGIYFMKQLLLFIFTKILIGIKSKTALSVAFCFTAAFLSAFLDALTVIAVVISVAVGFYAIYHRVASGQGGSQTHDHTCDSDVDELTREDLEDYRAFLRSLLMHAGVGTALGGVMTMVGEPQNLIIADQAGWMFGEFIIRMLPITAPVFICGILTCIAVEKLGICGYGAKLPENVRKILEDYEAEERKNRTNIDNAKLIIQGLIAVWLIVGLALHLAAVGLIGLSVIILATAFTGVIEEHSMGKAFEEALPFTALLAVFFAVVAVIIDQELFKPIIDAVLAVEDKGAQLALFYVANGLLSMVSDNVFVGTVYINEVKAALMDGVITRDQFDLLAVAINTGTNLPSVATPNGQAAFLFLLTSALAPLIQLSYGRMVWMALPYTIVLALVGMFGIIFFLEPMTAMFYDLGWIAPGTIESATSAISSGH.

12 helical membrane-spanning segments follow: residues 13–33 (FLGK…VINP), 34–54 (LVFF…EFIF), 90–110 (LVAN…IYFM), 121–141 (ILIG…TAAF), 145–165 (FLDA…FYAI), 205–225 (LLMH…VGEP), 241–261 (FIIR…LTCI), 306–326 (GLIA…VGLI), 351–371 (EEAL…AVII), 393–413 (LALF…VFVG), 455–475 (GQAA…QLSY), and 481–501 (MALP…IFFL).

The protein belongs to the NhaB Na(+)/H(+) (TC 2.A.34) antiporter family.

The protein localises to the cell inner membrane. It catalyses the reaction 2 Na(+)(in) + 3 H(+)(out) = 2 Na(+)(out) + 3 H(+)(in). Functionally, na(+)/H(+) antiporter that extrudes sodium in exchange for external protons. In Aliivibrio fischeri (strain ATCC 700601 / ES114) (Vibrio fischeri), this protein is Na(+)/H(+) antiporter NhaB.